Consider the following 279-residue polypeptide: Putative pyruvate, phosphate dikinase regulatory protein (279 aa).

153–160 (GISRTSKT) serves as a coordination point for ADP.

The protein belongs to the pyruvate, phosphate/water dikinase regulatory protein family. PDRP subfamily.

The enzyme catalyses N(tele)-phospho-L-histidyl/L-threonyl-[pyruvate, phosphate dikinase] + ADP = N(tele)-phospho-L-histidyl/O-phospho-L-threonyl-[pyruvate, phosphate dikinase] + AMP + H(+). It catalyses the reaction N(tele)-phospho-L-histidyl/O-phospho-L-threonyl-[pyruvate, phosphate dikinase] + phosphate + H(+) = N(tele)-phospho-L-histidyl/L-threonyl-[pyruvate, phosphate dikinase] + diphosphate. Functionally, bifunctional serine/threonine kinase and phosphorylase involved in the regulation of the pyruvate, phosphate dikinase (PPDK) by catalyzing its phosphorylation/dephosphorylation. The protein is Putative pyruvate, phosphate dikinase regulatory protein of Bartonella bacilliformis (strain ATCC 35685 / KC583 / Herrer 020/F12,63).